A 70-amino-acid polypeptide reads, in one-letter code: Brevinin-1S (70 aa).

An N-terminal signal peptide occupies residues 1-22 (MFTLKKSLLLLFFLGTINLSLC). Residues 23–44 (EEERNAEEERRDDPEERDVEVE) constitute a propeptide that is removed on maturation. Cys64 and Cys70 are disulfide-bonded.

The protein belongs to the frog skin active peptide (FSAP) family. Brevinin subfamily. In terms of tissue distribution, expressed by the skin glands.

It localises to the secreted. In terms of biological role, antimicrobial peptide. This is Brevinin-1S from Odorrana schmackeri (Schmacker's frog).